The chain runs to 299 residues: Bifunctional protein FolD 2 (299 aa).

NADP(+) is bound by residues 168–170 (GRS), Ser-193, and Ile-234.

This sequence belongs to the tetrahydrofolate dehydrogenase/cyclohydrolase family. Homodimer.

The catalysed reaction is (6R)-5,10-methylene-5,6,7,8-tetrahydrofolate + NADP(+) = (6R)-5,10-methenyltetrahydrofolate + NADPH. The enzyme catalyses (6R)-5,10-methenyltetrahydrofolate + H2O = (6R)-10-formyltetrahydrofolate + H(+). Its pathway is one-carbon metabolism; tetrahydrofolate interconversion. Its function is as follows. Catalyzes the oxidation of 5,10-methylenetetrahydrofolate to 5,10-methenyltetrahydrofolate and then the hydrolysis of 5,10-methenyltetrahydrofolate to 10-formyltetrahydrofolate. The sequence is that of Bifunctional protein FolD 2 from Rhizobium meliloti (strain 1021) (Ensifer meliloti).